The chain runs to 206 residues: MARAALIVCLLMACAWSSHAVMFKLSPNTQKCLKEDIQANQLVMGEYEVSDVPGQIIDYIARDTKGHILSQKEHITKGKFSFMSEVYDAYEICFISKVPAHQRGIVQEVSLLTKKGVETKSYEGIGEASKLKPLEVDLKRLEDLSDSIVRDFVLMRKREEEMRDTNEKTNSRVLFFSIFSMCCLLGLATWQVLYLRRYFKAKKLIE.

The signal sequence occupies residues 1–20 (MARAALIVCLLMACAWSSHA). At 21-172 (VMFKLSPNTQ…RDTNEKTNSR (152 aa)) the chain is on the lumenal side. The GOLD domain maps to 30–140 (QKCLKEDIQA…LKPLEVDLKR (111 aa)). Residues 173–193 (VLFFSIFSMCCLLGLATWQVL) traverse the membrane as a helical segment. The Cytoplasmic portion of the chain corresponds to 194-206 (YLRRYFKAKKLIE).

Belongs to the EMP24/GP25L family.

The protein localises to the membrane. Eca and bai are essential, though not redundant, for dorsoventral patterning of the embryo. Specifically required during early embryogenesis for the activity of maternal tkv, while the zygotic tkv is not affected. This chain is Transmembrane emp24 domain-containing protein bai, found in Drosophila erecta (Fruit fly).